The chain runs to 58 residues: Potassium channel toxin alpha-KTx 1.6 (58 aa).

A signal peptide spans 1–21 (MKISFLLLLAIVICSIGWTEA). The residue at position 22 (glutamine 22) is a Pyrrolidone carboxylic acid. 3 disulfide bridges follow: cysteine 28–cysteine 49, cysteine 34–cysteine 54, and cysteine 38–cysteine 56.

It belongs to the short scorpion toxin superfamily. Potassium channel inhibitor family. Alpha-KTx 01 subfamily. As to expression, expressed by the venom gland.

The protein resides in the secreted. Its function is as follows. Potent blocker of both large-conductance calcium-activated potassium channels (KCa1.1/KCNMA1) and voltage-gated potassium channels (Kv1.3/KCNA3 and ERG1/Kv11.1/KCNH2). In Olivierus martensii (Manchurian scorpion), this protein is Potassium channel toxin alpha-KTx 1.6.